The primary structure comprises 438 residues: 23S rRNA (uracil(1939)-C(5))-methyltransferase RlmD (438 aa).

Residues 9-68 (RRTVNRHIITVTADNLDAQGQGVARHQGKTIFVAGLLPGEQAQVQLTEEKRQFAKAKLVK) form the TRAM domain. [4Fe-4S] cluster-binding residues include Cys81, Cys87, Cys90, and Cys168. S-adenosyl-L-methionine contacts are provided by Gln272, Phe301, Asn306, Glu322, Asn349, and Asp370. The active-site Nucleophile is the Cys396.

It belongs to the class I-like SAM-binding methyltransferase superfamily. RNA M5U methyltransferase family. RlmD subfamily.

The catalysed reaction is uridine(1939) in 23S rRNA + S-adenosyl-L-methionine = 5-methyluridine(1939) in 23S rRNA + S-adenosyl-L-homocysteine + H(+). In terms of biological role, catalyzes the formation of 5-methyl-uridine at position 1939 (m5U1939) in 23S rRNA. In Photorhabdus laumondii subsp. laumondii (strain DSM 15139 / CIP 105565 / TT01) (Photorhabdus luminescens subsp. laumondii), this protein is 23S rRNA (uracil(1939)-C(5))-methyltransferase RlmD.